The sequence spans 878 residues: Protein translocase subunit SecA (878 aa).

ATP contacts are provided by residues Q81, 99 to 103 (GEGKT), and D489.

Belongs to the SecA family.

It is found in the plastid. The protein localises to the chloroplast stroma. It localises to the chloroplast thylakoid membrane. The enzyme catalyses ATP + H2O + cellular proteinSide 1 = ADP + phosphate + cellular proteinSide 2.. Functionally, has a central role in coupling the hydrolysis of ATP to the transfer of proteins across the thylakoid membrane. The polypeptide is Protein translocase subunit SecA (Thalassiosira pseudonana (Marine diatom)).